The sequence spans 337 residues: 5-formaminoimidazole-4-carboxamide-1-(beta)-D-ribofuranosyl 5'-monophosphate synthetase (337 aa).

5-amino-1-(5-phospho-beta-D-ribosyl)imidazole-4-carboxamide-binding residues include His14 and Ser74. An ATP-grasp domain is found at 81 to 328 (VELVERMKVP…IAREIRLAIE (248 aa)). ATP is bound by residues 125–185 (PDDI…VPVY) and Glu207. Asn235 contacts 5-amino-1-(5-phospho-beta-D-ribosyl)imidazole-4-carboxamide. Glu273 and Glu286 together coordinate Mg(2+).

This sequence belongs to the phosphohexose mutase family. The cofactor is Mg(2+). Requires Mn(2+) as cofactor.

It catalyses the reaction 5-amino-1-(5-phospho-beta-D-ribosyl)imidazole-4-carboxamide + formate + ATP = 5-formamido-1-(5-phospho-D-ribosyl)imidazole-4-carboxamide + ADP + phosphate. The protein operates within purine metabolism; IMP biosynthesis via de novo pathway; 5-formamido-1-(5-phospho-D-ribosyl)imidazole-4-carboxamide from 5-amino-1-(5-phospho-D-ribosyl)imidazole-4-carboxamide (formate route): step 1/1. Its function is as follows. Catalyzes the ATP- and formate-dependent formylation of 5-aminoimidazole-4-carboxamide-1-beta-d-ribofuranosyl 5'-monophosphate (AICAR) to 5-formaminoimidazole-4-carboxamide-1-beta-d-ribofuranosyl 5'-monophosphate (FAICAR) in the absence of folates. This is 5-formaminoimidazole-4-carboxamide-1-(beta)-D-ribofuranosyl 5'-monophosphate synthetase from Pyrococcus abyssi (strain GE5 / Orsay).